Reading from the N-terminus, the 749-residue chain is Sentrin-specific protease 5 (749 aa).

The span at 268-279 (TGDHQENLRDNN) shows a compositional bias: basic and acidic residues. Disordered stretches follow at residues 268-288 (TGDHQENLRDNNTEGDNCNPV) and 394-440 (QESG…EEDG). Residues 557–718 (FYNKHMLDMD…VFVLQYCKCL (162 aa)) are protease. Active-site residues include His-640, Asp-657, and Cys-707.

The protein belongs to the peptidase C48 family. In terms of assembly, interacts with CCAR2.

It localises to the nucleus. Its subcellular location is the nucleolus. Functionally, protease that catalyzes two essential functions in the SUMO pathway: processing of full-length SUMO3 to its mature form and deconjugation of SUMO2 and SUMO3 from targeted proteins. Has weak proteolytic activity against full-length SUMO1 or SUMO1 conjugates. Required for cell division. This is Sentrin-specific protease 5 (Senp5) from Mus musculus (Mouse).